Reading from the N-terminus, the 371-residue chain is MKKSLFCGVCLCALVAMGGTSFADIMVGVGAPLTGSQAAFGEQIKRGVEAAVAEANAKGGMNGEQITLVYGDDAADPKQGISVANKFVGDGVKFVIGHFNSGVSIPTSDIYAENGVLMIAPGTTNPTFTERELWNTFRTCRRDDKQGIVPGKYMADNYKDGKVAILHDKTPYGQGLADETKKKLNELGTKETLYEGVNVGEKDFSALIAKLKQAGVNVVYWGGLHPEAGLIIRQMADQGLKAQFISGDGIVSNELASIAGPAVEGTLNTFGPDPRNNPDNAELVKKFRDAGFEPEAYTFYAYAGVQSLVNAANAAGSNDPMEVATAMKEKGPFKTVLGDISFDAKGDPSLSPYVMFEWRKGEDGKYNYFQK.

Residues 1 to 23 (MKKSLFCGVCLCALVAMGGTSFA) form the signal peptide.

This sequence belongs to the leucine-binding protein family.

Component of an amino-acid transport system. The sequence is that of Leu/Ile/Val-binding protein homolog 2 from Brucella abortus (strain 2308).